Here is a 245-residue protein sequence, read N- to C-terminus: uncharacterized protein (245 aa).

Helical transmembrane passes span 29 to 51 and 61 to 83; these read LVVL…RIGM and TILF…LMLH.

The protein resides in the cell membrane. This is an uncharacterized protein from Treponema pallidum (strain Nichols).